We begin with the raw amino-acid sequence, 541 residues long: Imidazole glycerol phosphate synthase hisHF (541 aa).

Residues 2–214 (IVSIVDYGSG…LTGNYEQPIS (213 aa)) form the Glutamine amidotransferase type-1 domain. Residues C80, H189, and E191 each act as for GATase activity in the active site. The segment at 228 to 541 (LTKRIIACLD…LAIHDVLVRT (314 aa)) is cyclase. Residues D237 and D396 contribute to the active site.

This sequence in the C-terminal section; belongs to the HisA/HisF family.

The catalysed reaction is 5-[(5-phospho-1-deoxy-D-ribulos-1-ylimino)methylamino]-1-(5-phospho-beta-D-ribosyl)imidazole-4-carboxamide + L-glutamine = D-erythro-1-(imidazol-4-yl)glycerol 3-phosphate + 5-amino-1-(5-phospho-beta-D-ribosyl)imidazole-4-carboxamide + L-glutamate + H(+). The enzyme catalyses L-glutamine + H2O = L-glutamate + NH4(+). It participates in amino-acid biosynthesis; L-histidine biosynthesis; L-histidine from 5-phospho-alpha-D-ribose 1-diphosphate: step 5/9. IGPS catalyzes the conversion of PRFAR and glutamine to IGP, AICAR and glutamate. The glutaminase domain produces the ammonia necessary for the cyclase domain to produce IGP and AICAR from PRFAR. The ammonia is channeled to the active site of the cyclase domain. The sequence is that of Imidazole glycerol phosphate synthase hisHF (his4) from Schizosaccharomyces pombe (strain 972 / ATCC 24843) (Fission yeast).